The sequence spans 239 residues: Sugar fermentation stimulation protein homolog (239 aa).

This sequence belongs to the SfsA family.

This is Sugar fermentation stimulation protein homolog from Methylobacterium sp. (strain 4-46).